The following is a 173-amino-acid chain: Translocon-associated protein subunit delta (173 aa).

Positions 1-23 (MAAMASLGALALLLLSSLSRCSA) are cleaved as a signal peptide. Residues 24 to 144 (EACLEPQITP…SVDHRGTWNG (121 aa)) lie on the Lumenal side of the membrane. C26 and C57 are oxidised to a cystine. Residue K73 forms a Glycyl lysine isopeptide (Lys-Gly) (interchain with G-Cter in ubiquitin) linkage. A helical membrane pass occupies residues 145-165 (PWVSTEVLAAAIGLVIYYLAF). The Cytoplasmic portion of the chain corresponds to 166-173 (SAKSHIQA).

Belongs to the TRAP-delta family. As to quaternary structure, heterotetramer of TRAP-alpha, TRAP-beta, TRAP-delta and TRAP-gamma.

The protein resides in the endoplasmic reticulum membrane. Functionally, TRAP proteins are part of a complex whose function is to bind calcium to the ER membrane and thereby regulate the retention of ER resident proteins. This chain is Translocon-associated protein subunit delta (SSR4), found in Homo sapiens (Human).